A 358-amino-acid polypeptide reads, in one-letter code: Carbamoyl phosphate synthase small chain (358 aa).

2 CPSase regions span residues 1–168 (MYNR…PALG) and 1–171 (MYNR…GRGR). L-glutamine is bound by residues S46, G220, and G222. The Glutamine amidotransferase type-1 domain occupies 172-358 (RVVLVDLGMK…FIKNIDNNMK (187 aa)). Residue C247 is the Nucleophile of the active site. L-glutamine is bound by residues M248, Q251, N289, G291, and Y292. Active-site residues include H332 and E334.

This sequence belongs to the CarA family. As to quaternary structure, composed of two chains; the small (or glutamine) chain promotes the hydrolysis of glutamine to ammonia, which is used by the large (or ammonia) chain to synthesize carbamoyl phosphate. Tetramer of heterodimers (alpha,beta)4.

The enzyme catalyses hydrogencarbonate + L-glutamine + 2 ATP + H2O = carbamoyl phosphate + L-glutamate + 2 ADP + phosphate + 2 H(+). It catalyses the reaction L-glutamine + H2O = L-glutamate + NH4(+). It participates in amino-acid biosynthesis; L-arginine biosynthesis; carbamoyl phosphate from bicarbonate: step 1/1. Its pathway is pyrimidine metabolism; UMP biosynthesis via de novo pathway; (S)-dihydroorotate from bicarbonate: step 1/3. Small subunit of the glutamine-dependent carbamoyl phosphate synthetase (CPSase). CPSase catalyzes the formation of carbamoyl phosphate from the ammonia moiety of glutamine, carbonate, and phosphate donated by ATP, constituting the first step of 2 biosynthetic pathways, one leading to arginine and/or urea and the other to pyrimidine nucleotides. The small subunit (glutamine amidotransferase) binds and cleaves glutamine to supply the large subunit with the substrate ammonia. This is Carbamoyl phosphate synthase small chain from Fusobacterium nucleatum subsp. nucleatum (strain ATCC 25586 / DSM 15643 / BCRC 10681 / CIP 101130 / JCM 8532 / KCTC 2640 / LMG 13131 / VPI 4355).